Consider the following 265-residue polypeptide: Polyprenol monophosphomannose synthase (265 aa).

Basic and acidic residues predominate over residues 1–10 (MSVPGEREQG). Positions 1 to 21 (MSVPGEREQGAGEDPATVRPT) are disordered.

This sequence belongs to the glycosyltransferase 2 family. Interacts with Lnt (also called Ppm2, AC A0QZ13) upon coexpression in E.coli, which increases the PPM synthase activity of this protein.

The protein resides in the cytoplasm. The catalysed reaction is a di-trans,poly-cis-dolichyl phosphate + GDP-alpha-D-mannose = a di-trans,poly-cis-dolichyl beta-D-mannosyl phosphate + GDP. Functionally, transfers mannose from GDP-mannose to lipid acceptors to form polyprenol monophosphomannose (PPM); catalytic activity in vitro is enhanced by Lnt (AC A0QZ13). PMM is an alkai-stable sugar donor which adds mannose-phosphate residues to triacylated-PIM2, eventually leading to generation of the cell wall glycolipid lipoglycan modulins lipoarabinomannan (LAM) and lipomannan (LM). The sequence is that of Polyprenol monophosphomannose synthase from Mycolicibacterium smegmatis (strain ATCC 700084 / mc(2)155) (Mycobacterium smegmatis).